The sequence spans 84 residues: Small ribosomal subunit protein bS16 (84 aa).

The protein belongs to the bacterial ribosomal protein bS16 family.

In Cupriavidus necator (strain ATCC 17699 / DSM 428 / KCTC 22496 / NCIMB 10442 / H16 / Stanier 337) (Ralstonia eutropha), this protein is Small ribosomal subunit protein bS16.